A 678-amino-acid polypeptide reads, in one-letter code: DNA ligase (678 aa).

NAD(+) contacts are provided by residues 35–39 (DEEYD), 84–85 (SL), and glutamate 115. Lysine 117 acts as the N6-AMP-lysine intermediate in catalysis. NAD(+)-binding residues include arginine 138, glutamate 172, lysine 288, and lysine 312. Cysteine 406, cysteine 409, cysteine 425, and cysteine 430 together coordinate Zn(2+). The BRCT domain occupies 589–678 (VQSKILSNLT…IKNLRQQKLF (90 aa)).

This sequence belongs to the NAD-dependent DNA ligase family. LigA subfamily. Mg(2+) serves as cofactor. It depends on Mn(2+) as a cofactor.

The catalysed reaction is NAD(+) + (deoxyribonucleotide)n-3'-hydroxyl + 5'-phospho-(deoxyribonucleotide)m = (deoxyribonucleotide)n+m + AMP + beta-nicotinamide D-nucleotide.. Its function is as follows. DNA ligase that catalyzes the formation of phosphodiester linkages between 5'-phosphoryl and 3'-hydroxyl groups in double-stranded DNA using NAD as a coenzyme and as the energy source for the reaction. It is essential for DNA replication and repair of damaged DNA. This chain is DNA ligase, found in Pseudothermotoga lettingae (strain ATCC BAA-301 / DSM 14385 / NBRC 107922 / TMO) (Thermotoga lettingae).